A 259-amino-acid chain; its full sequence is Ribosomal RNA small subunit methyltransferase J (259 aa).

S-adenosyl-L-methionine-binding positions include 101–102 (RD), 117–118 (ER), 153–154 (SS), and Asp-176.

It belongs to the methyltransferase superfamily. RsmJ family.

It is found in the cytoplasm. It carries out the reaction guanosine(1516) in 16S rRNA + S-adenosyl-L-methionine = N(2)-methylguanosine(1516) in 16S rRNA + S-adenosyl-L-homocysteine + H(+). In terms of biological role, specifically methylates the guanosine in position 1516 of 16S rRNA. The polypeptide is Ribosomal RNA small subunit methyltransferase J (Aliivibrio fischeri (strain ATCC 700601 / ES114) (Vibrio fischeri)).